A 347-amino-acid chain; its full sequence is Quinolinate synthase (347 aa).

Residues H47 and S68 each contribute to the iminosuccinate site. A [4Fe-4S] cluster-binding site is contributed by C113. Residues 139-141 (YAN) and S156 contribute to the iminosuccinate site. Residue C200 participates in [4Fe-4S] cluster binding. Iminosuccinate contacts are provided by residues 226 to 228 (HPE) and T243. Residue C297 coordinates [4Fe-4S] cluster.

Belongs to the quinolinate synthase family. Type 1 subfamily. The cofactor is [4Fe-4S] cluster.

The protein localises to the cytoplasm. It carries out the reaction iminosuccinate + dihydroxyacetone phosphate = quinolinate + phosphate + 2 H2O + H(+). Its pathway is cofactor biosynthesis; NAD(+) biosynthesis; quinolinate from iminoaspartate: step 1/1. Its function is as follows. Catalyzes the condensation of iminoaspartate with dihydroxyacetone phosphate to form quinolinate. The chain is Quinolinate synthase from Shigella boydii serotype 4 (strain Sb227).